A 301-amino-acid polypeptide reads, in one-letter code: Probable alpha-L-glutamate ligase (301 aa).

The 184-residue stretch at 104 to 287 (MQLLSRRGIG…IAGMIVEFIE (184 aa)) folds into the ATP-grasp domain. ATP-binding positions include Lys141, 178–179 (EY), Asp187, and 211–213 (RSN). Positions 248, 260, and 262 each coordinate Mg(2+). Mn(2+) contacts are provided by Asp248, Glu260, and Asn262.

It belongs to the RimK family. It depends on Mg(2+) as a cofactor. Mn(2+) serves as cofactor.

The chain is Probable alpha-L-glutamate ligase from Vibrio cholerae serotype O1 (strain ATCC 39541 / Classical Ogawa 395 / O395).